The chain runs to 89 residues: Small ribosomal subunit protein bS20 (89 aa).

The protein belongs to the bacterial ribosomal protein bS20 family.

Binds directly to 16S ribosomal RNA. This is Small ribosomal subunit protein bS20 from Helicobacter pylori (strain Shi470).